The chain runs to 671 residues: UvrABC system protein B (671 aa).

The Helicase ATP-binding domain maps to 25–178 (EGIKKGYKHQ…DAMLKKLVEI (154 aa)). 38 to 45 (GVTGSGKT) is an ATP binding site. The Beta-hairpin motif lies at 91–114 (YYDYYQPEAYIPETDTYIEKDALI). Positions 435-601 (QVEDLLEEIH…TVKSKIKDIL (167 aa)) constitute a Helicase C-terminal domain. In terms of domain architecture, UVR spans 626-661 (EETIKKLEQEMKHAAENLEFEKAAEIRDKIFKIKEK).

This sequence belongs to the UvrB family. Forms a heterotetramer with UvrA during the search for lesions. Interacts with UvrC in an incision complex.

The protein resides in the cytoplasm. Its function is as follows. The UvrABC repair system catalyzes the recognition and processing of DNA lesions. A damage recognition complex composed of 2 UvrA and 2 UvrB subunits scans DNA for abnormalities. Upon binding of the UvrA(2)B(2) complex to a putative damaged site, the DNA wraps around one UvrB monomer. DNA wrap is dependent on ATP binding by UvrB and probably causes local melting of the DNA helix, facilitating insertion of UvrB beta-hairpin between the DNA strands. Then UvrB probes one DNA strand for the presence of a lesion. If a lesion is found the UvrA subunits dissociate and the UvrB-DNA preincision complex is formed. This complex is subsequently bound by UvrC and the second UvrB is released. If no lesion is found, the DNA wraps around the other UvrB subunit that will check the other stand for damage. The polypeptide is UvrABC system protein B (Thermodesulfovibrio yellowstonii (strain ATCC 51303 / DSM 11347 / YP87)).